The sequence spans 85 residues: uncharacterized protein (85 aa).

The N-terminal stretch at 1–19 is a signal peptide; that stretch reads MKTIFTVGAVVLATCLLSG. Cysteine 20 is lipidated: N-palmitoyl cysteine. Cysteine 20 carries S-diacylglycerol cysteine lipidation.

The protein localises to the cell outer membrane. This is an uncharacterized protein from Escherichia coli (strain K12).